The sequence spans 118 residues: MEGQTFKKKERLRLKRNFKNVFEKGGRLIDNNFVIIYVPNTMDYNRIAVIVNRKFGNAVVRNLIKRYIREIYRTNKTFFPLGYDFVFIPRKELSKNFKGIDYSQIKNQILKLVRKLEA.

The protein belongs to the RnpA family. Consists of a catalytic RNA component (M1 or rnpB) and a protein subunit.

It carries out the reaction Endonucleolytic cleavage of RNA, removing 5'-extranucleotides from tRNA precursor.. Functionally, RNaseP catalyzes the removal of the 5'-leader sequence from pre-tRNA to produce the mature 5'-terminus. It can also cleave other RNA substrates such as 4.5S RNA. The protein component plays an auxiliary but essential role in vivo by binding to the 5'-leader sequence and broadening the substrate specificity of the ribozyme. The protein is Ribonuclease P protein component of Petrotoga mobilis (strain DSM 10674 / SJ95).